Consider the following 299-residue polypeptide: MTFKSGFVAILGRPNVGKSTFLNHVMGQKIAIMSDKAQTTRNKIMGIYTTETEQIVFIDTPGIHKPKTALGDFMVESAYSTLREVETVLFMVPADEKRGKGDDMIIERLKAAKIPVILVINKIDKVHPDQLLEQIDDFRSQMDFKEVVPISALQGNNVPTLIKLLTDNLEEGFQYFPEDQITDHPERFLVSEMVREKVLHLTQQEVPHSVAVVVESMKRDEETDKVHIRATIMVERDSQKGIIIGKQGAMLKKIGKMARRDIELMLGDKVYLETWVKVKKNWRDKKLDLADFGYNEKEY.

Residues 4–171 form the Era-type G domain; the sequence is KSGFVAILGR…IKLLTDNLEE (168 aa). The G1 stretch occupies residues 12–19; the sequence is GRPNVGKS. GTP is bound at residue 12–19; it reads GRPNVGKS. The segment at 38-42 is G2; sequence QTTRN. The segment at 59-62 is G3; it reads DTPG. Residues 59–63 and 121–124 contribute to the GTP site; these read DTPGI and NKID. Residues 121–124 form a G4 region; the sequence is NKID. Positions 150-152 are G5; the sequence is ISA. Residues 202–280 enclose the KH type-2 domain; sequence TQQEVPHSVA…YLETWVKVKK (79 aa).

It belongs to the TRAFAC class TrmE-Era-EngA-EngB-Septin-like GTPase superfamily. Era GTPase family. Monomer.

Its subcellular location is the cytoplasm. The protein localises to the cell membrane. Its function is as follows. An essential GTPase that binds both GDP and GTP, with rapid nucleotide exchange. Plays a role in 16S rRNA processing and 30S ribosomal subunit biogenesis and possibly also in cell cycle regulation and energy metabolism. This chain is GTPase Era, found in Streptococcus agalactiae serotype III (strain NEM316).